A 186-amino-acid chain; its full sequence is ADP-ribosylation factor-like protein 6 (186 aa).

Residue Gly2 is the site of N-myristoyl glycine attachment. GTP contacts are provided by residues 24-31 (GLDNSGKT), Thr50, 69-73 (DMSGQ), Gly72, 130-133 (NKMD), and Ala164. Thr50 is a binding site for Mg(2+).

Belongs to the small GTPase superfamily. Arf family. As to quaternary structure, interacts with SEC61B, ARL6IP1, ARL6IP2, ARL6IP3, ARL6IP4 ARL6IP5 and ARL6IP6. Interacts (GTP-bound form) with the BBSome a complex that contains BBS1, BBS2, BBS4, BBS5, BBS7, BBS8/TTC8, BBS9 and BBIP10. Interacts (GTP-free form) with IFT27. In terms of tissue distribution, most abundant in brain and kidney. Expressed in heart and eye. Isoform 2 is expressed only in the retina.

It localises to the cell projection. The protein resides in the cilium membrane. The protein localises to the cytoplasm. Its subcellular location is the cytoskeleton. It is found in the cilium axoneme. It localises to the cilium basal body. In terms of biological role, involved in membrane protein trafficking at the base of the ciliary organelle. Mediates recruitment onto plasma membrane of the BBSome complex which would constitute a coat complex required for sorting of specific membrane proteins to the primary cilia. Together with BBS1, is necessary for correct trafficking of PKD1 to primary cilia. Together with the BBSome complex and LTZL1, controls SMO ciliary trafficking and contributes to the sonic hedgehog (SHH) pathway regulation. May regulate cilia assembly and disassembly and subsequent ciliary signaling events such as the Wnt signaling cascade. Isoform 2 may be required for proper retinal function and organization. The polypeptide is ADP-ribosylation factor-like protein 6 (Arl6) (Mus musculus (Mouse)).